A 90-amino-acid chain; its full sequence is UPF0335 protein RPB_1426 (90 aa).

It belongs to the UPF0335 family.

This chain is UPF0335 protein RPB_1426, found in Rhodopseudomonas palustris (strain HaA2).